We begin with the raw amino-acid sequence, 577 residues long: 2-succinyl-5-enolpyruvyl-6-hydroxy-3-cyclohexene-1-carboxylate synthase (577 aa).

Belongs to the TPP enzyme family. MenD subfamily. Homodimer. It depends on Mg(2+) as a cofactor. Mn(2+) is required as a cofactor. Requires thiamine diphosphate as cofactor.

The enzyme catalyses isochorismate + 2-oxoglutarate + H(+) = 5-enolpyruvoyl-6-hydroxy-2-succinyl-cyclohex-3-ene-1-carboxylate + CO2. It participates in quinol/quinone metabolism; 1,4-dihydroxy-2-naphthoate biosynthesis; 1,4-dihydroxy-2-naphthoate from chorismate: step 2/7. The protein operates within cofactor biosynthesis; phylloquinone biosynthesis. Its function is as follows. Catalyzes the thiamine diphosphate-dependent decarboxylation of 2-oxoglutarate and the subsequent addition of the resulting succinic semialdehyde-thiamine pyrophosphate anion to isochorismate to yield 2-succinyl-5-enolpyruvyl-6-hydroxy-3-cyclohexene-1-carboxylate (SEPHCHC). The protein is 2-succinyl-5-enolpyruvyl-6-hydroxy-3-cyclohexene-1-carboxylate synthase of Synechococcus sp. (strain CC9311).